Consider the following 377-residue polypeptide: Glutamate 5-kinase (377 aa).

K20 serves as a coordination point for ATP. Positions 60, 147, and 159 each coordinate substrate. 179–180 (TD) is an ATP binding site. Residues 285-363 (AGRLVIDDGA…DKVYQVLGEA (79 aa)) form the PUA domain.

This sequence belongs to the glutamate 5-kinase family.

The protein resides in the cytoplasm. The enzyme catalyses L-glutamate + ATP = L-glutamyl 5-phosphate + ADP. The protein operates within amino-acid biosynthesis; L-proline biosynthesis; L-glutamate 5-semialdehyde from L-glutamate: step 1/2. Its function is as follows. Catalyzes the transfer of a phosphate group to glutamate to form L-glutamate 5-phosphate. This is Glutamate 5-kinase from Acinetobacter baumannii (strain SDF).